The chain runs to 833 residues: Leucine--tRNA ligase (833 aa).

The 'HIGH' region motif lies at 41–52; that stretch reads PYPSGAGLHVGH. The 'KMSKS' region signature appears at 610–614; it reads KMSKS. ATP is bound at residue Lys-613.

This sequence belongs to the class-I aminoacyl-tRNA synthetase family.

The protein localises to the cytoplasm. It carries out the reaction tRNA(Leu) + L-leucine + ATP = L-leucyl-tRNA(Leu) + AMP + diphosphate. The sequence is that of Leucine--tRNA ligase from Streptococcus equi subsp. zooepidemicus (strain H70).